The following is a 115-amino-acid chain: T-cell receptor gamma chain V region V108B (115 aa).

Residues Met-1 to Gly-18 form the signal peptide. Residues Gln-19–Ile-115 form a v segment region.

This Mus musculus (Mouse) protein is T-cell receptor gamma chain V region V108B (Tcrg-V1).